Consider the following 546-residue polypeptide: Carboxylic ester hydrolase FVEG_12634 (546 aa).

The tract at residues 72 to 91 (FTDGTKICPQPPSSNTPDPS) is disordered. The active-site Acyl-ester intermediate is Ser-214.

The protein belongs to the type-B carboxylesterase/lipase family.

The catalysed reaction is a carboxylic ester + H2O = an alcohol + a carboxylate + H(+). Its function is as follows. Carboxylic ester hydrolase; part of the Fusarium detoxification of benzoxazolinone cluster 2 (FDB2) involved in the degradation of benzoxazolinones produced by the host plant. Maize, wheat, and rye produce the 2 benzoxazinone phytoanticipins 2,4-dihy-droxy-7-methoxy-1,4-benzoxazin-3-one (DIMBOA) and 2,4-dihydroxy-1,4-benzoxazin-3-one (DIBOA) that, due to their inherent instability once released, spontaneously degrade to the more stable corresponding benzoxazolinones, 6-methoxy-2-benzoxazolinone (MBOA) and 2-benzoxazolinone (BOA), respectively. The first step in the detoxification of benzoxazolinones involves the hydrolysis of the cyclic ester bond of benzoxazolinones by the FDB1 cluster gamma-lactamase MBL1 to aminophenols. MBL1 is able to convert BOA into 2-aminophenol (2-AP), as well as MBOA into 5-methoxy-2-aminophenol (2-AMP). The FDB2 cluster N-malonyltransferase FDB2/NAT1 then metabolizes aminophenols via N-malonylation to non-toxic malonamic acids. FDB2/NAT1 converts 2-AP into N-(2-hydroxyphenyl) malonamic acid (HPMA) and 2-AMP into N-(2-hydroxy-4-methoxyphenyl) malonamic acid (HMPMA). The duplicated dienlactone hydrolases DLH1 and DLH2 may provide redundant function for hydrolyzing the lactone moiety in the BOA molecule. The roles of the amidases an other enzymes encoded by the 2 FDB clusters have not been identified so far. This Gibberella moniliformis (strain M3125 / FGSC 7600) (Maize ear and stalk rot fungus) protein is Carboxylic ester hydrolase FVEG_12634.